The primary structure comprises 1046 residues: Toluene efflux pump membrane transporter TtgE (1046 aa).

12 helical membrane-spanning segments follow: residues 10-30 (IFAWVLAIIAMLAGALSLTKM), 339-359 (SVVHTILEAVVLVFLVMFLFL), 370-390 (LAVPVVLLAAFALLPYFGISI), 392-412 (VLTMYAMVLAIGLLVDDAIVV), 440-460 (GALVGIGMVLSAVFVPMAFFG), 470-490 (FAVTIVICMSLSVLVALIFTP), 542-562 (LIFALITAGTGYLFTQIPKAF), 871-891 (APMLYALTVLIVFLCLAALYE), 895-915 (VPMSVILVVPLGIFGAVLATL), 927-947 (VGLMTTVGLSAKNAILIIEFA), 973-993 (IIMTSLAFTFGVLPMARATGA), and 1008-1028 (GMITATVLAVFFVPLFYVVVV).

It belongs to the resistance-nodulation-cell division (RND) (TC 2.A.6) family.

It is found in the cell inner membrane. Functionally, the inner membrane transporter component of an inducible organic solvent efflux pump. Involved in export of toluene and styrene but not of m-xylene, propylbenzene or ethylbenzene. Is not involved in antibiotic or AMP efflux. This chain is Toluene efflux pump membrane transporter TtgE (ttgE), found in Pseudomonas putida (strain DOT-T1E).